We begin with the raw amino-acid sequence, 124 residues long: Small ribosomal subunit protein uS12 (124 aa).

Asp-89 carries the 3-methylthioaspartic acid modification.

Belongs to the universal ribosomal protein uS12 family. As to quaternary structure, part of the 30S ribosomal subunit. Contacts proteins S8 and S17. May interact with IF1 in the 30S initiation complex.

Functionally, with S4 and S5 plays an important role in translational accuracy. Interacts with and stabilizes bases of the 16S rRNA that are involved in tRNA selection in the A site and with the mRNA backbone. Located at the interface of the 30S and 50S subunits, it traverses the body of the 30S subunit contacting proteins on the other side and probably holding the rRNA structure together. The combined cluster of proteins S8, S12 and S17 appears to hold together the shoulder and platform of the 30S subunit. The polypeptide is Small ribosomal subunit protein uS12 (Treponema pallidum subsp. pallidum (strain SS14)).